Here is a 489-residue protein sequence, read N- to C-terminus: MNGKYLSQLLDAKNKALTADVLIKALQTDSRKIQPGDLFIAYPGLQVDGRDYIKEALDKKAAAVFYEANQYNPSIQTKVPLIPFENLQHRIGEIAARFYDDPSCEMEIIGITGTNGKTSCAQFIAQALQSQGIRCGVIGTLGYGFLGSLHKTSHTTPEPIQLQQAFAEMRKQGAKAIAMEVSSHALHQRRVEGVQFDIAVFTQLSRDHLDYHGDMENYARAKELLFQQPGLHTGVVNCDDALGKRIIAHYRHQLTLVGYSANGVKDDRVSSVIASAIQPLAQGFSVEVQTPWGEGTFTTPLFGRFNISNLLAVLSVLCLCEIPFDKALLELSQLRNVPGRMQVVDSQRQPQIIVDYAHTPDALEKALTALREHCQGRLICVFGCGGDRDRGKRPQMAAVAEQHADQIILTNDNPRTESPLTIIQDIQAGFKNKNAVLVKLDRAEAIRYAVQMAAVNDIVLIAGKGHETTQTIADQVLPFNDVEEAKKAL.

Position 30 (Ser30) interacts with UDP-N-acetyl-alpha-D-muramoyl-L-alanyl-D-glutamate. 113 to 119 (GTNGKTS) serves as a coordination point for ATP. UDP-N-acetyl-alpha-D-muramoyl-L-alanyl-D-glutamate-binding positions include 155–156 (TT), Ser182, Gln188, and Arg190. Lys222 is subject to N6-carboxylysine. Meso-2,6-diaminopimelate contacts are provided by residues Arg388, 412–415 (DNPR), Gly463, and Glu467. The Meso-diaminopimelate recognition motif motif lies at 412 to 415 (DNPR).

Belongs to the MurCDEF family. MurE subfamily. The cofactor is Mg(2+). Carboxylation is probably crucial for Mg(2+) binding and, consequently, for the gamma-phosphate positioning of ATP.

It is found in the cytoplasm. It catalyses the reaction UDP-N-acetyl-alpha-D-muramoyl-L-alanyl-D-glutamate + meso-2,6-diaminopimelate + ATP = UDP-N-acetyl-alpha-D-muramoyl-L-alanyl-gamma-D-glutamyl-meso-2,6-diaminopimelate + ADP + phosphate + H(+). Its pathway is cell wall biogenesis; peptidoglycan biosynthesis. Functionally, catalyzes the addition of meso-diaminopimelic acid to the nucleotide precursor UDP-N-acetylmuramoyl-L-alanyl-D-glutamate (UMAG) in the biosynthesis of bacterial cell-wall peptidoglycan. The protein is UDP-N-acetylmuramoyl-L-alanyl-D-glutamate--2,6-diaminopimelate ligase of Coxiella burnetii (strain RSA 493 / Nine Mile phase I).